The primary structure comprises 748 residues: Rho GTPase-activating protein 24 (748 aa).

The region spanning 18–124 (NATKCGWLRK…WVKSIRRVIW (107 aa)) is the PH domain. Positions 134–328 (QKLEDTVRYE…VMISKHDRLF (195 aa)) constitute a Rho-GAP domain. The segment at 328-476 (FPKDTEPQSK…SSGTKMGTHS (149 aa)) is disordered. Composition is skewed to polar residues over residues 335–347 (QSKP…SNNN) and 356–368 (GQLQ…NTKE). S369, S391, S396, S398, S402, S413, S415, and S437 each carry phosphoserine. A compositionally biased stretch (basic and acidic residues) spans 369 to 381 (SPVRRCSWDKPES). Positions 382–405 (PQRSSMDNGSPTALSGSKTNSPRN) are enriched in polar residues. Over residues 432–476 (IVTNGSFSSSNAEGVEKTQTTPNGSLQARRTSSLKSSGTKMGTHS) the composition is skewed to polar residues. A Phosphothreonine modification is found at T452. Position 495 is a phosphoserine (S495). The tract at residues 582-640 (DFYGGNFEDPVLDGPPQDDLSHPGDYENKSDRRSVGGRSSRATSSSDNSETFVGNTSSN) is disordered. A compositionally biased stretch (basic and acidic residues) spans 600 to 615 (DLSHPGDYENKSDRRS). Residues 617–630 (GGRSSRATSSSDNS) are compositionally biased toward low complexity. The span at 631–640 (ETFVGNTSSN) shows a compositional bias: polar residues. Residues 649–729 (SSLKQEMTKQ…KEMEQFFSTF (81 aa)) adopt a coiled-coil conformation.

As to quaternary structure, interacts with FLNA. Phosphorylated by ROCK, leading to activate the RacGAP activity.

It is found in the cytoplasm. The protein localises to the cytoskeleton. It localises to the cell junction. Its subcellular location is the adherens junction. The protein resides in the focal adhesion. It is found in the cell projection. In terms of biological role, rho GTPase-activating protein involved in cell polarity, cell morphology and cytoskeletal organization. Acts as a GTPase activator for the Rac-type GTPase by converting it to an inactive GDP-bound state. Controls actin remodeling by inactivating Rac downstream of Rho leading to suppress leading edge protrusion and promotes cell retraction to achieve cellular polarity. Able to suppress RAC1 and CDC42 activity in vitro. Overexpression induces cell rounding with partial or complete disruption of actin stress fibers and formation of membrane ruffles, lamellipodia, and filopodia. Isoform 2 is a vascular cell-specific GAP involved in modulation of angiogenesis. This Rattus norvegicus (Rat) protein is Rho GTPase-activating protein 24 (Arhgap24).